We begin with the raw amino-acid sequence, 137 residues long: Histone H2B (137 aa).

Positions 1-10 (MAPKAADKKP) are enriched in basic and acidic residues. The segment at 1-46 (MAPKAADKKPASKAPATASKAPEKKDAGKKTAASGDKKKRSKSRKE) is disordered. An N6-acetyllysine; alternate mark is found at K8 and K9. Residues K8 and K9 each participate in a glycyl lysine isopeptide (Lys-Gly) (interchain with G-Cter in SUMO); alternate cross-link. S12 bears the Phosphoserine mark. N6-acetyllysine is present on K13. K24 is subject to N6-acetyllysine; alternate. A Glycyl lysine isopeptide (Lys-Gly) (interchain with G-Cter in SUMO); alternate cross-link involves residue K24. Residue K25 forms a Glycyl lysine isopeptide (Lys-Gly) (interchain with G-Cter in SUMO) linkage. A Glycyl lysine isopeptide (Lys-Gly) (interchain with G-Cter in ubiquitin) cross-link involves residue K131.

Belongs to the histone H2B family. The nucleosome is a histone octamer containing two molecules each of H2A, H2B, H3 and H4 assembled in one H3-H4 heterotetramer and two H2A-H2B heterodimers. The octamer wraps approximately 147 bp of DNA. Post-translationally, monoubiquitinated by the UBC2-BRE1 complex to form H2BK123ub1. H2BK123ub1 gives a specific tag for epigenetic transcriptional activation and is also prerequisite for H3K4me and H3K79me formation. H2BK123ub1 also modulates the formation of double-strand breaks during meiosis and is a prerequisite for DNA-damage checkpoint activation. Phosphorylated to form H2BS10ph during progression through meiotic prophase. May be correlated with chromosome condensation. In terms of processing, acetylated by GCN5 to form H2BK11ac and H2BK16ac. H2BK16ac can also be formed by ESA1. Acetylation of N-terminal lysines and particularly formation of H2BK11acK16ac has a positive effect on transcription. Post-translationally, sumoylation to form H2BK6su or H2BK7su, and probably also H2BK16su or H2BK17su, occurs preferentially near the telomeres and represses gene transcription.

It is found in the nucleus. Its subcellular location is the chromosome. Its function is as follows. Core component of nucleosome. Nucleosomes wrap and compact DNA into chromatin, limiting DNA accessibility to the cellular machineries which require DNA as a template. Histones thereby play a central role in transcription regulation, DNA repair, DNA replication and chromosomal stability. DNA accessibility is regulated via a complex set of post-translational modifications of histones, also called histone code, and nucleosome remodeling. This is Histone H2B (HTB1) from Gibberella zeae (strain ATCC MYA-4620 / CBS 123657 / FGSC 9075 / NRRL 31084 / PH-1) (Wheat head blight fungus).